The chain runs to 513 residues: ATP synthase subunit alpha (513 aa).

Gly169–Thr176 contacts ATP.

This sequence belongs to the ATPase alpha/beta chains family. As to quaternary structure, F-type ATPases have 2 components, CF(1) - the catalytic core - and CF(0) - the membrane proton channel. CF(1) has five subunits: alpha(3), beta(3), gamma(1), delta(1), epsilon(1). CF(0) has three main subunits: a(1), b(2) and c(9-12). The alpha and beta chains form an alternating ring which encloses part of the gamma chain. CF(1) is attached to CF(0) by a central stalk formed by the gamma and epsilon chains, while a peripheral stalk is formed by the delta and b chains.

Its subcellular location is the cell inner membrane. The enzyme catalyses ATP + H2O + 4 H(+)(in) = ADP + phosphate + 5 H(+)(out). In terms of biological role, produces ATP from ADP in the presence of a proton gradient across the membrane. The alpha chain is a regulatory subunit. In Shewanella halifaxensis (strain HAW-EB4), this protein is ATP synthase subunit alpha.